Here is a 519-residue protein sequence, read N- to C-terminus: tRNA-2-methylthio-N(6)-dimethylallyladenosine synthase (519 aa).

Residues 1 to 23 (MNEQQRKQQSQIRTEQANVDRIK) form a disordered region. Residues 7–17 (KQQSQIRTEQA) show a composition bias toward polar residues. The region spanning 76-194 (KKFLIRTYGC…LPHLVKEALF (119 aa)) is the MTTase N-terminal domain. 6 residues coordinate [4Fe-4S] cluster: Cys85, Cys121, Cys155, Cys231, Cys235, and Cys238. One can recognise a Radical SAM core domain in the interval 217 to 450 (RKGKIKAWVN…VNKQSAASMK (234 aa)). In terms of domain architecture, TRAM spans 450-513 (KDYAGKKVKV…TWSLNGVMVE (64 aa)).

This sequence belongs to the methylthiotransferase family. MiaB subfamily. As to quaternary structure, monomer. [4Fe-4S] cluster serves as cofactor.

The protein localises to the cytoplasm. It catalyses the reaction N(6)-dimethylallyladenosine(37) in tRNA + (sulfur carrier)-SH + AH2 + 2 S-adenosyl-L-methionine = 2-methylsulfanyl-N(6)-dimethylallyladenosine(37) in tRNA + (sulfur carrier)-H + 5'-deoxyadenosine + L-methionine + A + S-adenosyl-L-homocysteine + 2 H(+). Catalyzes the methylthiolation of N6-(dimethylallyl)adenosine (i(6)A), leading to the formation of 2-methylthio-N6-(dimethylallyl)adenosine (ms(2)i(6)A) at position 37 in tRNAs that read codons beginning with uridine. This is tRNA-2-methylthio-N(6)-dimethylallyladenosine synthase from Oceanobacillus iheyensis (strain DSM 14371 / CIP 107618 / JCM 11309 / KCTC 3954 / HTE831).